Consider the following 211-residue polypeptide: Agamous-like MADS-box protein AGL12 (211 aa).

Residues 3-57 (RGKIQLKRIENPVHRQVTFCKRRTGLLKKAKELSVLCDAEIGVVIFSPQGKLFEL) form the MADS-box domain. The K-box domain maps to 95–185 (NLDPKDEINV…LEKIEENNNS (91 aa)).

As to expression, preferentially expressed in roots. In root meristem, expressed in external cells of columella, lateral root cap and atrichoblasts. In mature root, expressed in the central cylinder. Expressed in leaf vasculature, young floral meristems and nectaries.

The protein localises to the nucleus. Its function is as follows. Probable transcription activator that regulates root development by controlling cell proliferation in root meristem. May mediate responses to auxin in the root. May act as promoter of the flowering transition through up-regulation of SOC, FT and LFY. This Arabidopsis thaliana (Mouse-ear cress) protein is Agamous-like MADS-box protein AGL12.